Consider the following 396-residue polypeptide: Argininosuccinate synthase (396 aa).

9–17 (AYSGGLDTS) contributes to the ATP binding site. Y85 contributes to the L-citrulline binding site. An ATP-binding site is contributed by G115. L-aspartate-binding residues include T117, N121, and D122. N121 is a binding site for L-citrulline. Positions 125, 173, 258, and 270 each coordinate L-citrulline.

It belongs to the argininosuccinate synthase family. Type 1 subfamily. As to quaternary structure, homotetramer.

The protein resides in the cytoplasm. It carries out the reaction L-citrulline + L-aspartate + ATP = 2-(N(omega)-L-arginino)succinate + AMP + diphosphate + H(+). Its pathway is amino-acid biosynthesis; L-arginine biosynthesis; L-arginine from L-ornithine and carbamoyl phosphate: step 2/3. The protein is Argininosuccinate synthase of Streptococcus agalactiae serotype III (strain NEM316).